The sequence spans 629 residues: MKHSPLIASACLALVLMSSSLIGSTEARNKKKYVGETGGDFEFIDEINKNTQSNKNLGEHKRWIHDPSSDLCRPLNCKKREICLLEDEFSAVCVSKKELHKNRDEIITKAKYLEEEAKRRVNQQDNQDSQDAEDINNDDEDNSSDGGSSNSSPTGTNNAQASVQGNEETDDEDKSLSLGDDDESKEDDVFYENSIAAGDKQQQQQQLSQPAAGPSVIQQDDDEELDNCKPCPVAKPTFLCGADNRTYSSLCRLDYHNCIHSTSIRIACKGFCPCKEIVDGKRLQRISGYNNKYNKKISLDQQQQQQQQQQQQQQQQQAYKDSNNNNIMMNSGNIMGGNNNDFNTIMNDKEDNNRHNNHINAQYTFTPEEIKYDNKHYKYLKYTAYKKDSKYQEDKHKMRNYNEVVEKQQQKFNKNSNLNAYPSKSAECKPQQLTAIGNRLLDWFSVIMADSKKRRQHSQKSKAHFPPACKTEAKWMFGHLDLNNDGQLSLQEMYDLEHDQNERCIKPFIDTCDLDTDSSINTREWCRCFEKTDRPCAAVRRRIAGDFAGAYAPDCDIQGFYKPTQCHNSVGVCWCVDKHGVEFANTRTRGKPNCESVVNNAASLTSDDEDEGADDEDSAEGSADQMLVF.

The first 27 residues, Met1–Ala27, serve as a signal peptide directing secretion. Disordered stretches follow at residues Lys118 to Glu186 and Gly198 to Glu223. Residues Asp128 to Ser143 are compositionally biased toward acidic residues. Asn142 is a glycosylation site (N-linked (GlcNAc...) asparagine). Residues Ser144–Ala159 are compositionally biased toward low complexity. The segment covering Glu167–Glu186 has biased composition (acidic residues). In terms of domain architecture, Kazal-like spans Asp222–Pro273. 3 disulfides stabilise this stretch: Cys228–Cys258, Cys231–Cys251, and Cys240–Cys272. An N-linked (GlcNAc...) asparagine glycan is attached at Asn244. Residues Ser298 to Asn356 form a disordered region. Residues Gln301–Asn340 show a composition bias toward low complexity. EF-hand domains follow at residues Ala468–Arg503 and Phe508–Pro535. 5 residues coordinate Ca(2+): Asp481, Asn483, Asp485, Gln487, and Glu492. Residues Asp533 to Cys594 enclose the Thyroglobulin type-1 domain. Disulfide bonds link Cys536-Cys555, Cys566-Cys573, and Cys575-Cys594. The disordered stretch occupies residues Ala602 to Phe629. Acidic residues predominate over residues Ser606–Ala619. Positions Glu620–Phe629 are enriched in low complexity.

Interacts (in heparan sulfate-bound form) with wg. In terms of processing, contains heparan sulfate O-linked oligosaccharides. As to expression, in the wing disk, detected throughout the disk where it is localized primarily to the apical surface but is also present at the basal surface (at protein level).

The protein resides in the secreted. Binds to the Wnt signaling protein wg, stabilizes it and promotes its extracellular distribution. This is required for establishment of a wg gradient during development to allow for regulation of target genes at different levels. The chain is Proteoglycan Cow from Drosophila melanogaster (Fruit fly).